We begin with the raw amino-acid sequence, 596 residues long: Aspartate--tRNA(Asp/Asn) ligase (596 aa).

Glu172 contacts L-aspartate. An aspartate region spans residues 196-199; that stretch reads QLFK. Arg218 provides a ligand contact to L-aspartate. Residues 218-220 and Gln227 each bind ATP; that span reads RDE. Residue His455 participates in L-aspartate binding. Residue Glu489 coordinates ATP. Position 496 (Arg496) interacts with L-aspartate. 541-544 provides a ligand contact to ATP; sequence GLDR.

Belongs to the class-II aminoacyl-tRNA synthetase family. Type 1 subfamily. As to quaternary structure, homodimer.

The protein resides in the cytoplasm. It carries out the reaction tRNA(Asx) + L-aspartate + ATP = L-aspartyl-tRNA(Asx) + AMP + diphosphate. Functionally, aspartyl-tRNA synthetase with relaxed tRNA specificity since it is able to aspartylate not only its cognate tRNA(Asp) but also tRNA(Asn). Reaction proceeds in two steps: L-aspartate is first activated by ATP to form Asp-AMP and then transferred to the acceptor end of tRNA(Asp/Asn). The polypeptide is Aspartate--tRNA(Asp/Asn) ligase (Bordetella avium (strain 197N)).